Here is a 310-residue protein sequence, read N- to C-terminus: Ribose-phosphate pyrophosphokinase (310 aa).

ATP is bound by residues 33–35 (DGE) and 92–93 (RQ). Residues His-127 and Asp-166 each contribute to the Mg(2+) site. Residue Lys-189 is part of the active site. D-ribose 5-phosphate is bound by residues Arg-191, Asp-215, and 219–223 (DTAGT).

It belongs to the ribose-phosphate pyrophosphokinase family. Class I subfamily. As to quaternary structure, homohexamer. Mg(2+) serves as cofactor.

Its subcellular location is the cytoplasm. The enzyme catalyses D-ribose 5-phosphate + ATP = 5-phospho-alpha-D-ribose 1-diphosphate + AMP + H(+). The protein operates within metabolic intermediate biosynthesis; 5-phospho-alpha-D-ribose 1-diphosphate biosynthesis; 5-phospho-alpha-D-ribose 1-diphosphate from D-ribose 5-phosphate (route I): step 1/1. Involved in the biosynthesis of the central metabolite phospho-alpha-D-ribosyl-1-pyrophosphate (PRPP) via the transfer of pyrophosphoryl group from ATP to 1-hydroxyl of ribose-5-phosphate (Rib-5-P). In Bordetella pertussis (strain Tohama I / ATCC BAA-589 / NCTC 13251), this protein is Ribose-phosphate pyrophosphokinase.